Consider the following 65-residue polypeptide: MSKKAPAKEGKKLPRAATWYEIDMEKGVFRFKNKLCPKCGSVMAFHREPVPRWHCGKCGFTQFQR.

Zn(2+) contacts are provided by cysteine 36, cysteine 39, cysteine 55, and cysteine 58. Residues cysteine 36–cysteine 58 form a C4-type zinc finger.

Belongs to the eukaryotic ribosomal protein eS31 family. As to quaternary structure, part of the 30S ribosomal subunit. Zn(2+) is required as a cofactor.

The sequence is that of Small ribosomal subunit protein eS31 from Pyrobaculum calidifontis (strain DSM 21063 / JCM 11548 / VA1).